The primary structure comprises 236 residues: Syntaxin-8 (236 aa).

Over 1–215 the chain is Cytoplasmic; the sequence is MAPDPWFSTY…LVDRKSTSCG (215 aa). A coiled-coil region spans residues 42–65; the sequence is VTIRALLQKLKEKIALLKDLLLRA. A t-SNARE coiled-coil homology domain is found at 145 to 207; it reads QKIIQEQDAG…RTETRRVNLV (63 aa). The residue at position 160 (Ser-160) is a Phosphoserine. The chain crosses the membrane as a helical; Anchor for type IV membrane protein span at residues 216-232; sequence MIMVILLLLVAIVVVAV. The Vesicular portion of the chain corresponds to 233-236; sequence WPTK.

Belongs to the syntaxin family. In terms of assembly, forms a SNARE complex with STX7, VTI1B and VAMP8 which functions in the homotypic fusion of late endosomes. Part of the SNARE core complex containing STX7, VAMP8 and VTI1B. Interacts with VAMP8. Interacts with HECTD3. Interacts with TPC1. Ubiquitinated by HECTD3.

The protein resides in the membrane. Vesicle trafficking protein that functions in the early secretory pathway, possibly by mediating retrograde transport from cis-Golgi membranes to the ER. This chain is Syntaxin-8 (STX8), found in Bos taurus (Bovine).